A 737-amino-acid chain; its full sequence is Protein bicaudal D homolog (737 aa).

Coiled-coil stretches lie at residues 1 to 255, 292 to 319, and 547 to 684; these read MAES…RNAE, GSSD…EKIF, and AENE…DRDR. The tract at residues 72-97 is disordered; sequence YRSQHQRSTRSELENEESLLEESSAK. A disordered region spans residues 686–737; sequence VFKRSSTRAPTRETYQPPRAVRYPGSTTTAQQPAPSSSGGSRGGPRRGDNQQ. The segment covering 710-719 has biased composition (polar residues); it reads GSTTTAQQPA.

The protein belongs to the BicD family. In terms of assembly, component of a dynein-regulating complex composed of at least bicd-1, dlc-1 and egal-1. Interacts with egal-1 and unc-83. As to expression, expressed in the excretory cell, body wall muscles, vulval muscle cells, PVD and FLP sensory neurons and AVF interneurons.

Its subcellular location is the nucleus envelope. It is found in the perikaryon. The protein resides in the cell projection. It localises to the dendrite. Part of a complex with dlc-1 and egal-1, which is recruited to the nuclear envelope by unc-83, where in turn, it recruits dynein to the nuclear surface and regulates nuclear migration in hypodermal precursor cells. Required for the formation of dendritic branches of PVD sensory neurons. The sequence is that of Protein bicaudal D homolog from Caenorhabditis elegans.